The chain runs to 399 residues: V-set and immunoglobulin domain-containing protein 4 (399 aa).

A signal peptide spans 1–19; sequence MGILLGLLLLGHLTVDTYG. At 20–283 the chain is on the extracellular side; the sequence is RPILEVPESV…TSAGPGKSLP (264 aa). 2 consecutive Ig-like domains span residues 21-131 and 143-226; these read PILE…DKIT and PTVT…SDIV. 2 disulfides stabilise this stretch: C41/C113 and C165/C211. Residues 284–304 traverse the membrane as a helical segment; the sequence is VFAIILIISLCCMVVFTMAYI. Residues 305 to 399 lie on the Cytoplasmic side of the membrane; the sequence is MLCRKTSQQE…FLATEGKSVC (95 aa).

As to expression, abundantly expressed in several fetal tissues. In adult tissues, highest expression in lung and placenta. Expressed in resting macrophages.

The protein resides in the membrane. Phagocytic receptor, strong negative regulator of T-cell proliferation and IL2 production. Potent inhibitor of the alternative complement pathway convertases. The chain is V-set and immunoglobulin domain-containing protein 4 (VSIG4) from Homo sapiens (Human).